A 225-amino-acid polypeptide reads, in one-letter code: Ras-related protein Rab-21 (225 aa).

N-acetylalanine is present on Ala-2. The GTP site is built by Gly-28, Gly-31, Lys-32, Thr-33, Ser-34, Asn-45, Asp-46, His-48, Thr-50, and Thr-51. A Mg(2+)-binding site is contributed by Thr-33. Positions Lys-43–Phe-56 match the Switch 1 motif. Residues Thr-51 and Asp-74 each contribute to the Mg(2+) site. Positions Ala-76 to Gly-94 match the Switch 2 motif. GTP is bound by residues Gly-77, Asn-132, Lys-133, Asp-135, Ala-163, and Lys-164. The segment at Glu-188–Gly-225 is disordered. S-geranylgeranyl cysteine attachment occurs at residues Cys-221 and Cys-222. Cys-222 is subject to Cysteine methyl ester. The propeptide at Ser-223–Gly-225 is removed in mature form.

Belongs to the small GTPase superfamily. Rab family. Interacts with the cytoplasmic tail of integrins ITGA1, ITGA2, ITGA5, ITGA6, ITGA11 and ITGB1. Interacts with RABGEF1 (via VPS9 domain). Interacts with ANKRD27. Interacts with VAMP7. Interacts (in GTP-bound form) with VAMP8 in response to starvation; the interaction probably regulates VAMP8 endolysosomal trafficking. Interacts (active GTP-bound form) with TMED10; the interaction is indirect and regulates TMED10 abundance and localization at the Golgi. Requires Mg(2+) as cofactor. Widely expressed. In jejunal tissue, predominantly expressed in the apical region of the epithelial cell layer of the villi, weak expression, if any, in the crypt epithelium. Capillary endothelium and some cell types in the lamina propria also show expression.

Its subcellular location is the endoplasmic reticulum membrane. It localises to the golgi apparatus. It is found in the trans-Golgi network. The protein localises to the golgi apparatus membrane. The protein resides in the early endosome membrane. Its subcellular location is the cytoplasmic vesicle membrane. It localises to the cleavage furrow. It is found in the cell projection. The protein localises to the neuron projection. It catalyses the reaction GTP + H2O = GDP + phosphate + H(+). Its activity is regulated as follows. Regulated by guanine nucleotide exchange factors (GEFs) including ANKRD27 and RABGEF1, which promote the exchange of bound GDP for free GTP. Regulated by GTPase activating proteins (GAPs) which increase the GTP hydrolysis activity. Inhibited by GDP dissociation inhibitors (GDIs). Functionally, the small GTPases Rab are key regulators of intracellular membrane trafficking, from the formation of transport vesicles to their fusion with membranes. Rabs cycle between an inactive GDP-bound form and an active GTP-bound form that is able to recruit to membranes different sets of downstream effectors directly responsible for vesicle formation, movement, tethering and fusion. RAB21 is involved in membrane trafficking control. During the mitosis of adherent cells, controls the endosomal trafficking of integrins which is required for the successful completion of cytokinesis. Regulates integrin internalization and recycling, but does not influence the traffic of endosomally translocated receptors in general. As a result, may regulate cell adhesion and migration. Involved in neurite growth. Following SBF2/MTMT13-mediated activation in response to starvation-induced autophagy, binds to and regulates SNARE protein VAMP8 endolysosomal transport required for SNARE-mediated autophagosome-lysosome fusion. Modulates protein levels of the cargo receptors TMED2 and TMED10, and required for appropriate Golgi localization of TMED10. The polypeptide is Ras-related protein Rab-21 (Homo sapiens (Human)).